A 516-amino-acid polypeptide reads, in one-letter code: MEKQNKVIIVDYGSQVTQLIARRIREAGVYSEIHPCIVTAAEVAAMSPSAVVLSGGPASVLGEDSPALDKGLLELGVPVLGICYGMQLLAHNLGGELSCSETREYGPADLKFCAGSPLWDGLKTDESSRVWMSHGDRVKKVPAGFTVTGSTETLEVAAMADDQRRIYAVQFHPEVHHSEDGVRMLHNFLFKIAGIKADWSMSSFCERVIKEVSEQVGPDDQVVCALSGGIDSTVVAVLLHKAIGHRLHCIFVDNGVLRLNEVDEVSGYLREHFDLNLTVVDARERFMKQFAGVEDPEKKRKIIGYTFIDVFDEESQKIPNVKYLAQGTLYPDVIESISHKGPSAVIKSHHNVGGLPETMKLKLIEPLRELFKDEVRKLAVELGLPDFIVWRHPFPGPGLAIRVIGEVTEERLDILRKADKIVQNELTASGWYRKVWQGFAVLLPLKTVGVMGDDRTYEHVIALRVVDSVDAMTADWVRLPSEVLERISSRIINEVKGVNRVVYDISSKPPSTIEWE.

Residues 6–198 (KVIIVDYGSQ…LFKIAGIKAD (193 aa)) enclose the Glutamine amidotransferase type-1 domain. Catalysis depends on Cys83, which acts as the Nucleophile. Residues His172 and Glu174 contribute to the active site. The GMPS ATP-PPase domain occupies 199-391 (WSMSSFCERV…LGLPDFIVWR (193 aa)). ATP is bound at residue 227-233 (SGGIDST).

In terms of assembly, homodimer.

It carries out the reaction XMP + L-glutamine + ATP + H2O = GMP + L-glutamate + AMP + diphosphate + 2 H(+). Its pathway is purine metabolism; GMP biosynthesis; GMP from XMP (L-Gln route): step 1/1. In terms of biological role, catalyzes the synthesis of GMP from XMP. This is GMP synthase [glutamine-hydrolyzing] from Oleidesulfovibrio alaskensis (strain ATCC BAA-1058 / DSM 17464 / G20) (Desulfovibrio alaskensis).